Here is a 405-residue protein sequence, read N- to C-terminus: MPENVRNIVVEELVRTPVEMQKVELVERKGIGHPDSIADGIAEAVSRALSREYIKRYGIILHHNTDQVEVVGGKAYPRFGGGEVIKPIYILLSGRAVEIVDREMFPVHEVAIKAAREYLKNAVRHLDLDHHVIIDSRIGQGSVDLVGVFNKAKENPIPLANDTSFGVGYAPLSETERIVLETEKLLNSEEFKKEWPAVGEDIKVMGLRKGDEIDITIAAAIVDSEVQNLDDYFAVKEAIYEAAKDVAEAHTERKVNIYVNTADDPEKGIYYITVTGTSAEAGDDGSVGRGNRVNGLITPNRHMSMEAAAGKNPVSHVGKIYNLLSMLIANDIAEQVEGVEEVYVRILSQIGKPIDQPLVASVQVIPKKGYSIDTIQKPAYEIANAWLDDITKIQKMILEDKLNVF.

Residue 139 to 144 (GQGSVD) participates in ATP binding.

It belongs to the AdoMet synthase 2 family. Mg(2+) serves as cofactor.

It carries out the reaction L-methionine + ATP + H2O = S-adenosyl-L-methionine + phosphate + diphosphate. Its pathway is amino-acid biosynthesis; S-adenosyl-L-methionine biosynthesis; S-adenosyl-L-methionine from L-methionine: step 1/1. Catalyzes the formation of S-adenosylmethionine from methionine and ATP. This is S-adenosylmethionine synthase from Thermococcus onnurineus (strain NA1).